A 399-amino-acid chain; its full sequence is Acetate kinase 2 (399 aa).

Residue Asn-10 coordinates Mg(2+). Lys-17 provides a ligand contact to ATP. Position 89 (Arg-89) interacts with substrate. The Proton donor/acceptor role is filled by Asp-146. ATP is bound by residues 206 to 210 (HLGNG), 281 to 283 (DCR), and 329 to 333 (GIGEN). A Mg(2+)-binding site is contributed by Glu-384.

This sequence belongs to the acetokinase family. Homodimer. The cofactor is Mg(2+). Requires Mn(2+) as cofactor.

The protein resides in the cytoplasm. The catalysed reaction is acetate + ATP = acetyl phosphate + ADP. It functions in the pathway metabolic intermediate biosynthesis; acetyl-CoA biosynthesis; acetyl-CoA from acetate: step 1/2. Functionally, catalyzes the formation of acetyl phosphate from acetate and ATP. Can also catalyze the reverse reaction. The protein is Acetate kinase 2 of Neisseria meningitidis serogroup B (strain ATCC BAA-335 / MC58).